Reading from the N-terminus, the 228-residue chain is Lipoprotein-releasing system ATP-binding protein LolD (228 aa).

The 222-residue stretch at 7–228 (LNCQNLTKDY…MQDGVLRPEM (222 aa)) folds into the ABC transporter domain. Position 43–50 (43–50 (GSSGSGKS)) interacts with ATP.

The protein belongs to the ABC transporter superfamily. Lipoprotein translocase (TC 3.A.1.125) family. In terms of assembly, the complex is composed of two ATP-binding proteins (LolD) and two transmembrane proteins (LolC and LolE).

It is found in the cell inner membrane. Functionally, part of the ABC transporter complex LolCDE involved in the translocation of mature outer membrane-directed lipoproteins, from the inner membrane to the periplasmic chaperone, LolA. Responsible for the formation of the LolA-lipoprotein complex in an ATP-dependent manner. This Mannheimia succiniciproducens (strain KCTC 0769BP / MBEL55E) protein is Lipoprotein-releasing system ATP-binding protein LolD.